Here is a 296-residue protein sequence, read N- to C-terminus: Protoheme IX farnesyltransferase (296 aa).

Transmembrane regions (helical) follow at residues 14–34, 36–56, 75–95, 99–119, 133–153, 163–183, 209–229, 234–254, and 265–285; these read IIFG…KGVI, YPLF…GCVF, VLVK…ILGI, LLLY…GFVI, VYGT…GYCA, LILL…IAIF, ITLY…SGYA, LVVA…GYKA, and FVFS…DFNV.

The protein belongs to the UbiA prenyltransferase family. Protoheme IX farnesyltransferase subfamily.

Its subcellular location is the cell inner membrane. It catalyses the reaction heme b + (2E,6E)-farnesyl diphosphate + H2O = Fe(II)-heme o + diphosphate. It functions in the pathway porphyrin-containing compound metabolism; heme O biosynthesis; heme O from protoheme: step 1/1. In terms of biological role, converts heme B (protoheme IX) to heme O by substitution of the vinyl group on carbon 2 of heme B porphyrin ring with a hydroxyethyl farnesyl side group. This chain is Protoheme IX farnesyltransferase, found in Yersinia enterocolitica serotype O:8 / biotype 1B (strain NCTC 13174 / 8081).